The primary structure comprises 237 residues: MGRAHEVRAASMAKTAAKKSAANGRAAKEIYMAAKQGGIDPNSNLALRSVIDKAKANQIPRDVIERAIKRAAGGDAENYVSNRYEGIGPSNVAILVDTLTSNVNRAAAMIREVFNKNKGNPDGKVNFLFEDVAMFAFKNKKEDEVLEALMSDEVEINDLICEDETIIIYAPFKAYNSVKHSLDKLNIDEYLISEIRAIPIDKRIEIKDKQTKLQLQTLLDKLDELEDVQNVYHNAEL.

It belongs to the TACO1 family.

The protein localises to the cytoplasm. The protein is Probable transcriptional regulatory protein MCAP_0598 of Mycoplasma capricolum subsp. capricolum (strain California kid / ATCC 27343 / NCTC 10154).